The chain runs to 132 residues: Small ribosomal subunit protein uS8c (132 aa).

Belongs to the universal ribosomal protein uS8 family. Part of the 30S ribosomal subunit.

Its subcellular location is the plastid. It localises to the chloroplast. Functionally, one of the primary rRNA binding proteins, it binds directly to 16S rRNA central domain where it helps coordinate assembly of the platform of the 30S subunit. This chain is Small ribosomal subunit protein uS8c (rps8), found in Adiantum capillus-veneris (Maidenhair fern).